We begin with the raw amino-acid sequence, 285 residues long: Phycobilisome 31.6 kDa linker polypeptide, phycocyanin-associated, rod (285 aa).

The 180-residue stretch at 1 to 180 (MPITTAASRL…LYRGYATSDR (180 aa)) folds into the PBS-linker domain.

Belongs to the phycobilisome linker protein family.

Its subcellular location is the cellular thylakoid membrane. Rod linker protein, associated with phycocyanin. Linker polypeptides determine the state of aggregation and the location of the disk-shaped phycobiliprotein units within the phycobilisome and modulate their spectroscopic properties in order to mediate a directed and optimal energy transfer. The polypeptide is Phycobilisome 31.6 kDa linker polypeptide, phycocyanin-associated, rod (cpcI3) (Microchaete diplosiphon (Fremyella diplosiphon)).